A 148-amino-acid polypeptide reads, in one-letter code: FAD synthase (148 aa).

Residues 5–6, 10–13, Asp92, and Tyr119 each bind ATP; these read TF and HPGH.

This sequence belongs to the archaeal FAD synthase family. As to quaternary structure, homodimer. A divalent metal cation serves as cofactor.

It catalyses the reaction FMN + ATP + H(+) = FAD + diphosphate. Its pathway is cofactor biosynthesis; FAD biosynthesis; FAD from FMN: step 1/1. In terms of biological role, catalyzes the transfer of the AMP portion of ATP to flavin mononucleotide (FMN) to produce flavin adenine dinucleotide (FAD) coenzyme. The chain is FAD synthase from Methanosphaera stadtmanae (strain ATCC 43021 / DSM 3091 / JCM 11832 / MCB-3).